The sequence spans 89 residues: Acylphosphatase (89 aa).

Residues 3 to 89 enclose the Acylphosphatase-like domain; that stretch reads CKRWILYGRV…GNYGSFHIEY (87 aa). Active-site residues include Arg18 and Asn36.

Belongs to the acylphosphatase family.

It carries out the reaction an acyl phosphate + H2O = a carboxylate + phosphate + H(+). The polypeptide is Acylphosphatase (acyP) (Petrotoga mobilis (strain DSM 10674 / SJ95)).